Here is a 152-residue protein sequence, read N- to C-terminus: Deoxyuridine 5'-triphosphate nucleotidohydrolase (152 aa).

Substrate-binding positions include 71–73 (RSG), N84, 88–90 (LID), and M98.

The protein belongs to the dUTPase family. The cofactor is Mg(2+).

The catalysed reaction is dUTP + H2O = dUMP + diphosphate + H(+). The protein operates within pyrimidine metabolism; dUMP biosynthesis; dUMP from dCTP (dUTP route): step 2/2. Functionally, this enzyme is involved in nucleotide metabolism: it produces dUMP, the immediate precursor of thymidine nucleotides and it decreases the intracellular concentration of dUTP so that uracil cannot be incorporated into DNA. The polypeptide is Deoxyuridine 5'-triphosphate nucleotidohydrolase (Shewanella woodyi (strain ATCC 51908 / MS32)).